We begin with the raw amino-acid sequence, 439 residues long: L-tryptophan decarboxylase (439 aa).

It belongs to the phosphatidylserine decarboxylase family.

It catalyses the reaction L-tryptophan + H(+) = tryptamine + CO2. The protein operates within secondary metabolite biosynthesis. L-tryptophan decarboxylase; part of the gene cluster that mediates the biosynthesis of psilocybin, a psychotropic tryptamine-derived natural product. The first step in the pathway is the decarboxylation of L-tryptophan to tryptamine by the decarboxylase psiD. PsiD does not decarboxylate phenylalanine, tyrosine, or 5-hydroxy- L -tryptophan (5-HTP). 4-hydroxy-L-tryptophan is accepted as substrate by psiD as well. The cytochrome P450 monooxygenase psiH then converts tryptamine to 4-hydroxytryptamine. The kinase psiK catalyzes the 4-O-phosphorylation step by converting 4-hydroxytryptamine into norbaeocystin. The methyltransferase psiM then catalyzes iterative methyl transfer to the amino group of norbaeocystin to yield psilocybin via a monomethylated intermediate, baeocystin. 4-hydroxy-6-methyl-l-tryptophancan also be converted the decarboxylase PsiD, kinase PsiK, and methyltransferase PsiM into respectively 6-methyl-norbaeocystin, 6-methylbaeocystin, and 6-methylpsilocybin. This Psilocybe cyanescens protein is L-tryptophan decarboxylase.